We begin with the raw amino-acid sequence, 430 residues long: Serine carboxypeptidase-like 13 (430 aa).

Residues 1-22 form the signal peptide; sequence MSLTLEFLLLLIVLILSHHAHS. 3 disulfides stabilise this stretch: Cys81–Cys319, Cys240–Cys254, and Cys278–Cys285. N-linked (GlcNAc...) asparagine glycosylation is present at Asn102. Ser177 is a catalytic residue. 2 N-linked (GlcNAc...) asparagine glycosylation sites follow: Asn299 and Asn323. Residue Asp355 is part of the active site. A glycan (N-linked (GlcNAc...) asparagine) is linked at Asn371. The active site involves His408.

This sequence belongs to the peptidase S10 family. Expression not detected.

The protein resides in the secreted. It carries out the reaction 2 1-O-(trans-sinapoyl)-beta-D-glucose = 1,2-di-O-sinapoyl beta-D-glucose + D-glucose. Functionally, catalyzes the formation of 1,2-bis-O-sinapoyl beta-D-glucoside. In Arabidopsis thaliana (Mouse-ear cress), this protein is Serine carboxypeptidase-like 13 (SCPL13).